The following is a 190-amino-acid chain: ADP-ribosylation factor-like protein 6 (190 aa).

Glycine 2 is lipidated: N-myristoyl glycine. GTP contacts are provided by residues 24–31 (GLDNSGKT), 69–73 (DMAGQ), and 130–133 (NKMD).

The protein belongs to the small GTPase superfamily. Arf family. As to expression, specifically expressed in ciliated cells.

It localises to the cytoplasm. The polypeptide is ADP-ribosylation factor-like protein 6 (Caenorhabditis elegans).